A 151-amino-acid polypeptide reads, in one-letter code: 3-dehydroquinate dehydratase (151 aa).

The active-site Proton acceptor is Tyr-24. Substrate is bound by residues Asn-76, His-82, and Asp-89. Catalysis depends on His-102, which acts as the Proton donor. Substrate-binding positions include 103-104 (VS) and Arg-113.

This sequence belongs to the type-II 3-dehydroquinase family. In terms of assembly, homododecamer.

The catalysed reaction is 3-dehydroquinate = 3-dehydroshikimate + H2O. Its pathway is metabolic intermediate biosynthesis; chorismate biosynthesis; chorismate from D-erythrose 4-phosphate and phosphoenolpyruvate: step 3/7. In terms of biological role, catalyzes a trans-dehydration via an enolate intermediate. This Rhodopseudomonas palustris (strain BisA53) protein is 3-dehydroquinate dehydratase.